Here is a 444-residue protein sequence, read N- to C-terminus: Multidrug resistance protein MdtA (444 aa).

Residues 1-20 (MKSQSKRTSRLFVFVGGVVA) form the signal peptide. Positions 37–52 (NNTSGAQQSARGQDTS) are enriched in polar residues. Disordered stretches follow at residues 37 to 60 (NNTS…RNTP) and 398 to 444 (TPRS…AEKS). Residues 406–419 (ANPASAEKAAAEAE) show a composition bias toward low complexity. A compositionally biased stretch (polar residues) spans 435-444 (ARSTTAAEKS).

The protein belongs to the membrane fusion protein (MFP) (TC 8.A.1) family. As to quaternary structure, part of a tripartite efflux system composed of MdtA, MdtB and MdtC.

The protein localises to the cell inner membrane. This is Multidrug resistance protein MdtA from Yersinia pseudotuberculosis serotype O:1b (strain IP 31758).